The sequence spans 265 residues: Hydroxyethylthiazole kinase 2 (265 aa).

A substrate-binding site is contributed by M39. 2 residues coordinate ATP: K115 and T168. G195 contacts substrate.

The protein belongs to the Thz kinase family. Mg(2+) serves as cofactor.

It catalyses the reaction 5-(2-hydroxyethyl)-4-methylthiazole + ATP = 4-methyl-5-(2-phosphooxyethyl)-thiazole + ADP + H(+). The protein operates within cofactor biosynthesis; thiamine diphosphate biosynthesis; 4-methyl-5-(2-phosphoethyl)-thiazole from 5-(2-hydroxyethyl)-4-methylthiazole: step 1/1. In terms of biological role, catalyzes the phosphorylation of the hydroxyl group of 4-methyl-5-beta-hydroxyethylthiazole (THZ). The protein is Hydroxyethylthiazole kinase 2 of Clostridium botulinum (strain Kyoto / Type A2).